Reading from the N-terminus, the 351-residue chain is Photosystem II D2 protein (351 aa).

Residues 39–59 form a helical membrane-spanning segment; sequence TAYLAAGGWFTGTTFVTSWYT. His116 lines the chlorophyll a pocket. The helical transmembrane segment at 123–139 threads the bilayer; sequence GFCLRQFEIARLVGIRP. Residues Gln128 and Asn141 each coordinate pheophytin a. A helical transmembrane segment spans residues 151-164; that stretch reads VFVSVFLLYPLGQA. His196 lines the chlorophyll a pocket. A helical membrane pass occupies residues 206-226; it reads GALLCAIHGATVENTLFEDGD. A plastoquinone contacts are provided by His213 and Phe260. His213 serves as a coordination point for Fe cation. His267 contributes to the Fe cation binding site. A helical transmembrane segment spans residues 277-293; sequence GLWTSSIGIVGLALNLR.

Belongs to the reaction center PufL/M/PsbA/D family. PSII is composed of 1 copy each of membrane proteins PsbA, PsbB, PsbC, PsbD, PsbE, PsbF, PsbH, PsbI, PsbJ, PsbK, PsbL, PsbM, PsbT, PsbX, PsbY, PsbZ, Psb30/Ycf12, at least 3 peripheral proteins of the oxygen-evolving complex and a large number of cofactors. It forms dimeric complexes. The cofactor is The D1/D2 heterodimer binds P680, chlorophylls that are the primary electron donor of PSII, and subsequent electron acceptors. It shares a non-heme iron and each subunit binds pheophytin, quinone, additional chlorophylls, carotenoids and lipids. There is also a Cl(-1) ion associated with D1 and D2, which is required for oxygen evolution. The PSII complex binds additional chlorophylls, carotenoids and specific lipids..

It localises to the plastid. The protein resides in the chloroplast thylakoid membrane. It catalyses the reaction 2 a plastoquinone + 4 hnu + 2 H2O = 2 a plastoquinol + O2. Its function is as follows. Photosystem II (PSII) is a light-driven water:plastoquinone oxidoreductase that uses light energy to abstract electrons from H(2)O, generating O(2) and a proton gradient subsequently used for ATP formation. It consists of a core antenna complex that captures photons, and an electron transfer chain that converts photonic excitation into a charge separation. The D1/D2 (PsbA/PsbD) reaction center heterodimer binds P680, the primary electron donor of PSII as well as several subsequent electron acceptors. D2 is needed for assembly of a stable PSII complex. The sequence is that of Photosystem II D2 protein from Thalassiosira pseudonana (Marine diatom).